A 351-amino-acid chain; its full sequence is Phosphate acetyltransferase (351 aa).

It belongs to the phosphate acetyltransferase and butyryltransferase family.

It localises to the cytoplasm. The enzyme catalyses acetyl-CoA + phosphate = acetyl phosphate + CoA. It functions in the pathway metabolic intermediate biosynthesis; acetyl-CoA biosynthesis; acetyl-CoA from acetate: step 2/2. The protein is Phosphate acetyltransferase (pta) of Rickettsia prowazekii (strain Madrid E).